The primary structure comprises 65 residues: Putative beta-neurotoxin RjAa12 (65 aa).

The 64-residue stretch at 1–64 folds into the LCN-type CS-alpha/beta domain; the sequence is KEGYPVGRDG…VWDSSTNKCG (64 aa). 4 cysteine pairs are disulfide-bonded: Cys-11–Cys-63, Cys-15–Cys-37, Cys-22–Cys-44, and Cys-26–Cys-46.

It belongs to the long (4 C-C) scorpion toxin superfamily. Sodium channel inhibitor family. Beta subfamily. As to expression, expressed by the venom gland.

The protein resides in the secreted. Its function is as follows. Beta toxins bind voltage-independently at site-4 of sodium channels (Nav) and shift the voltage of activation toward more negative potentials thereby affecting sodium channel activation and promoting spontaneous and repetitive firing. This is Putative beta-neurotoxin RjAa12 from Rhopalurus junceus (Caribbean blue scorpion).